The primary structure comprises 193 residues: Ion-translocating oxidoreductase complex subunit A (193 aa).

6 consecutive transmembrane segments (helical) span residues 5–25 (LLLL…FLGL), 39–59 (IGMG…SYLI), 63–83 (ILAP…VIAV), 102–122 (VLGI…VALL), 134–154 (IIYG…FSAM), and 171–191 (SIAM…TGLV).

It belongs to the NqrDE/RnfAE family. The complex is composed of six subunits: RnfA, RnfB, RnfC, RnfD, RnfE and RnfG.

Its subcellular location is the cell inner membrane. Functionally, part of a membrane-bound complex that couples electron transfer with translocation of ions across the membrane. The chain is Ion-translocating oxidoreductase complex subunit A from Aliivibrio salmonicida (strain LFI1238) (Vibrio salmonicida (strain LFI1238)).